The sequence spans 361 residues: Adenosine kinase (361 aa).

Positions 7–15 (PKPKKLKVE) match the Nuclear localization signal motif. Aspartate 34 lines the adenosine pocket. A Mg(2+)-binding site is contributed by serine 48. Position 76 is a phosphotyrosine (tyrosine 76). Asparagine 147 provides a ligand contact to Mg(2+). Residue glutamine 305 coordinates adenosine. The active site involves aspartate 316. Aspartate 316 (proton acceptor) is an active-site residue.

This sequence belongs to the carbohydrate kinase PfkB family. As to quaternary structure, monomer. The cofactor is Mg(2+). In terms of tissue distribution, widely expressed. Highly expressed in liver, testis, kidney and spleen (at protein level). In brain, expression in most forebrain structures and the cerebellum is higher than in the midbrain and brainstem (at protein level). Major isoform in testis and kidney. Not detected in most brain regions, except in the cerebellum, where it is expressed at a similar level to that of isoform 2 (at protein level). As to expression, major isoform in spleen and in most brain regions, except in the cerebellum, where it is expressed at a similar level to that of isoform 1 (at protein level).

The protein resides in the nucleus. The protein localises to the cytoplasm. It catalyses the reaction adenosine + ATP = AMP + ADP + H(+). The protein operates within purine metabolism; AMP biosynthesis via salvage pathway; AMP from adenosine: step 1/1. With respect to regulation, activity is inhibited by 5-iodotubercidin and 5'-amino-5'-deoxyadenosine. Functionally, catalyzes the phosphorylation of the purine nucleoside adenosine at the 5' position in an ATP-dependent manner. Serves as a potential regulator of concentrations of extracellular adenosine and intracellular adenine nucleotides. The sequence is that of Adenosine kinase (Adk) from Mus musculus (Mouse).